Reading from the N-terminus, the 100-residue chain is Small ribosomal subunit protein uS14 (100 aa).

It belongs to the universal ribosomal protein uS14 family. Part of the 30S ribosomal subunit. Contacts proteins S3 and S10.

Binds 16S rRNA, required for the assembly of 30S particles and may also be responsible for determining the conformation of the 16S rRNA at the A site. This is Small ribosomal subunit protein uS14 from Prochlorococcus marinus (strain AS9601).